Here is a 391-residue protein sequence, read N- to C-terminus: Phosphoglycerate kinase (391 aa).

Substrate-binding positions include Asp21–Asn23, Arg36, His59–Arg62, Arg113, and Arg146. ATP is bound by residues Lys197, Glu319, and Gly345 to Thr348.

It belongs to the phosphoglycerate kinase family. Monomer.

It localises to the cytoplasm. It catalyses the reaction (2R)-3-phosphoglycerate + ATP = (2R)-3-phospho-glyceroyl phosphate + ADP. The protein operates within carbohydrate degradation; glycolysis; pyruvate from D-glyceraldehyde 3-phosphate: step 2/5. The sequence is that of Phosphoglycerate kinase from Xanthomonas campestris pv. campestris (strain 8004).